A 658-amino-acid chain; its full sequence is Glycogen debranching enzyme (658 aa).

D335 functions as the Nucleophile in the catalytic mechanism. E370 serves as the catalytic Proton donor.

It belongs to the glycosyl hydrolase 13 family.

It catalyses the reaction Hydrolysis of (1-&gt;6)-alpha-D-glucosidic linkages to branches with degrees of polymerization of three or four glucose residues in limit dextrin.. Its pathway is glycan degradation; glycogen degradation. Its function is as follows. Removes maltotriose and maltotetraose chains that are attached by 1,6-alpha-linkage to the limit dextrin main chain, generating a debranched limit dextrin. This is Glycogen debranching enzyme from Erwinia tasmaniensis (strain DSM 17950 / CFBP 7177 / CIP 109463 / NCPPB 4357 / Et1/99).